The sequence spans 107 residues: Glutaredoxin 4 (107 aa).

A Glutaredoxin domain is found at 4 to 106 (IEKIERQIKD…KIISNAVLNS (103 aa)). Lys21 contacts glutathione. A [2Fe-2S] cluster-binding site is contributed by Cys29. Residues Arg58, Phe70, and 83-84 (CS) each bind glutathione.

The protein belongs to the glutaredoxin family. Monothiol subfamily. As to quaternary structure, homodimer.

It is found in the cytoplasm. In terms of biological role, monothiol glutaredoxin involved in the biogenesis of iron-sulfur clusters. This chain is Glutaredoxin 4 (grxD), found in Buchnera aphidicola subsp. Schizaphis graminum (strain Sg).